We begin with the raw amino-acid sequence, 122 residues long: Acidic phospholipase A2 4 (122 aa).

7 disulfides stabilise this stretch: Cys26–Cys115, Cys28–Cys44, Cys43–Cys95, Cys49–Cys122, Cys50–Cys88, Cys57–Cys81, and Cys75–Cys86. Ca(2+)-binding residues include Phe27, Gly29, and Gly31. His47 is an active-site residue. A Ca(2+)-binding site is contributed by Asp48. Residue Asp89 is part of the active site.

This sequence belongs to the phospholipase A2 family. Group II subfamily. D49 sub-subfamily. Ca(2+) is required as a cofactor. Expressed by the venom gland.

It localises to the secreted. The catalysed reaction is a 1,2-diacyl-sn-glycero-3-phosphocholine + H2O = a 1-acyl-sn-glycero-3-phosphocholine + a fatty acid + H(+). Functionally, snake venom phospholipase A2 (PLA2) that has high lipolytic activity. PLA2 catalyzes the calcium-dependent hydrolysis of the 2-acyl groups in 3-sn-phosphoglycerides. The protein is Acidic phospholipase A2 4 of Craspedocephalus gramineus (Bamboo pit viper).